A 564-amino-acid chain; its full sequence is Proline--tRNA ligase (564 aa).

Belongs to the class-II aminoacyl-tRNA synthetase family. ProS type 1 subfamily. As to quaternary structure, homodimer.

It is found in the cytoplasm. The catalysed reaction is tRNA(Pro) + L-proline + ATP = L-prolyl-tRNA(Pro) + AMP + diphosphate. Functionally, catalyzes the attachment of proline to tRNA(Pro) in a two-step reaction: proline is first activated by ATP to form Pro-AMP and then transferred to the acceptor end of tRNA(Pro). As ProRS can inadvertently accommodate and process non-cognate amino acids such as alanine and cysteine, to avoid such errors it has two additional distinct editing activities against alanine. One activity is designated as 'pretransfer' editing and involves the tRNA(Pro)-independent hydrolysis of activated Ala-AMP. The other activity is designated 'posttransfer' editing and involves deacylation of mischarged Ala-tRNA(Pro). The misacylated Cys-tRNA(Pro) is not edited by ProRS. The chain is Proline--tRNA ligase from Coxiella burnetii (strain Dugway 5J108-111).